Consider the following 397-residue polypeptide: Phosphoglycerate kinase (397 aa).

Substrate-binding positions include aspartate 26–asparagine 28, arginine 42, histidine 65–arginine 68, arginine 119, and arginine 152. Residues lysine 203, glutamate 325, and glycine 351–threonine 354 each bind ATP.

The protein belongs to the phosphoglycerate kinase family. As to quaternary structure, monomer.

It is found in the cytoplasm. It carries out the reaction (2R)-3-phosphoglycerate + ATP = (2R)-3-phospho-glyceroyl phosphate + ADP. Its pathway is carbohydrate degradation; glycolysis; pyruvate from D-glyceraldehyde 3-phosphate: step 2/5. The protein is Phosphoglycerate kinase of Bordetella bronchiseptica (strain ATCC BAA-588 / NCTC 13252 / RB50) (Alcaligenes bronchisepticus).